Reading from the N-terminus, the 426-residue chain is Squamosa promoter-binding-like protein 10 (426 aa).

Residues 178–255 (PPRCQAEGCK…AEHNRRRRKP (78 aa)) form an SBP-type zinc finger. 8 residues coordinate Zn(2+): C181, C186, C203, H206, C222, C225, H229, and C241. The Bipartite nuclear localization signal motif lies at 238 to 254 (KRSCRKRLAEHNRRRRK). Low complexity-rich tracts occupy residues 268-287 (DAAA…AATS) and 401-417 (SDQN…NNNN). 2 disordered regions span residues 268–290 (DAAA…SYTG) and 392–426 (PSTA…VDFM).

In terms of tissue distribution, expressed in stems, leaf sheaths, and young panicles.

The protein localises to the nucleus. Its function is as follows. Trans-acting factor that binds specifically to the consensus nucleotide sequence 5'-TNCGTACAA-3'. This Oryza sativa subsp. indica (Rice) protein is Squamosa promoter-binding-like protein 10 (SPL10).